Here is a 285-residue protein sequence, read N- to C-terminus: Ubiquinone biosynthesis protein COQ4, mitochondrial (285 aa).

The N-terminal 11 residues, 1 to 11, are a transit peptide targeting the mitochondrion; sequence MPPAVRQGMRT. Positions 166, 167, 170, and 182 each coordinate Zn(2+).

Belongs to the COQ4 family. Component of a multi-subunit COQ enzyme complex, composed of at least COQ3, COQ4, COQ5, COQ6, COQ7 and COQ9. Requires Zn(2+) as cofactor.

It localises to the mitochondrion inner membrane. It catalyses the reaction a 4-hydroxy-3-methoxy-5-(all-trans-polyprenyl)benzoate + H(+) = a 2-methoxy-6-(all-trans-polyprenyl)phenol + CO2. It functions in the pathway cofactor biosynthesis; ubiquinone biosynthesis. Functionally, lyase that catalyzes the C1-decarboxylation of 4-hydroxy-3-methoxy-5-(all-trans-polyprenyl)benzoic acid into 2-methoxy-6-(all-trans-polyprenyl)phenol during ubiquinone biosynthesis. The sequence is that of Ubiquinone biosynthesis protein COQ4, mitochondrial from Paracoccidioides lutzii (strain ATCC MYA-826 / Pb01) (Paracoccidioides brasiliensis).